Reading from the N-terminus, the 125-residue chain is Large ribosomal subunit protein bL12 (125 aa).

Belongs to the bacterial ribosomal protein bL12 family. Homodimer. Part of the ribosomal stalk of the 50S ribosomal subunit. Forms a multimeric L10(L12)X complex, where L10 forms an elongated spine to which 2 to 4 L12 dimers bind in a sequential fashion. Binds GTP-bound translation factors.

Forms part of the ribosomal stalk which helps the ribosome interact with GTP-bound translation factors. Is thus essential for accurate translation. This Rickettsia africae (strain ESF-5) protein is Large ribosomal subunit protein bL12.